Reading from the N-terminus, the 212-residue chain is Thymidylate kinase (212 aa).

11–18 (GMEGAGKS) lines the ATP pocket.

The protein belongs to the thymidylate kinase family.

It carries out the reaction dTMP + ATP = dTDP + ADP. Phosphorylation of dTMP to form dTDP in both de novo and salvage pathways of dTTP synthesis. The chain is Thymidylate kinase from Colwellia psychrerythraea (strain 34H / ATCC BAA-681) (Vibrio psychroerythus).